The sequence spans 475 residues: ATP synthase subunit beta, chloroplastic (475 aa).

156 to 163 (GGAGVGKT) contributes to the ATP binding site.

It belongs to the ATPase alpha/beta chains family. As to quaternary structure, F-type ATPases have 2 components, CF(1) - the catalytic core - and CF(0) - the membrane proton channel. CF(1) has five subunits: alpha(3), beta(3), gamma(1), delta(1), epsilon(1). CF(0) has four main subunits: a(1), b(1), b'(1) and c(9-12).

It is found in the plastid. The protein resides in the chloroplast thylakoid membrane. The enzyme catalyses ATP + H2O + 4 H(+)(in) = ADP + phosphate + 5 H(+)(out). In terms of biological role, produces ATP from ADP in the presence of a proton gradient across the membrane. The catalytic sites are hosted primarily by the beta subunits. The sequence is that of ATP synthase subunit beta, chloroplastic from Gracilaria tenuistipitata var. liui (Red alga).